We begin with the raw amino-acid sequence, 209 residues long: Chloramphenicol acetyltransferase (209 aa).

The active-site Proton acceptor is His189.

Belongs to the chloramphenicol acetyltransferase family. In terms of assembly, homotrimer.

The enzyme catalyses chloramphenicol + acetyl-CoA = chloramphenicol 3-acetate + CoA. This enzyme is an effector of chloramphenicol resistance in bacteria. This Staphylococcus aureus protein is Chloramphenicol acetyltransferase.